Reading from the N-terminus, the 314-residue chain is Homoserine O-succinyltransferase (314 aa).

Residue Cys142 is the Acyl-thioester intermediate of the active site. 2 residues coordinate substrate: Lys163 and Ser192. His235 functions as the Proton acceptor in the catalytic mechanism. Glu237 is an active-site residue. Arg249 contributes to the substrate binding site.

It belongs to the MetA family.

The protein localises to the cytoplasm. It catalyses the reaction L-homoserine + succinyl-CoA = O-succinyl-L-homoserine + CoA. Its pathway is amino-acid biosynthesis; L-methionine biosynthesis via de novo pathway; O-succinyl-L-homoserine from L-homoserine: step 1/1. In terms of biological role, transfers a succinyl group from succinyl-CoA to L-homoserine, forming succinyl-L-homoserine. In Shewanella woodyi (strain ATCC 51908 / MS32), this protein is Homoserine O-succinyltransferase.